Here is a 187-residue protein sequence, read N- to C-terminus: CASP-like protein 2 (187 aa).

Topologically, residues 1-24 (MKVSAVETGEISQVSAPRKGMIRG) are cytoplasmic. Residues 25–45 (LSIMDFILRIVAAIGTLGSAL) form a helical membrane-spanning segment. Over 46–72 (STGTTRETLPFTTQFVKFRAVFDDLPT) the chain is Extracellular. Residues 73-93 (FVFFVTSNSIVCGYLVLSLAL) form a helical membrane-spanning segment. The Cytoplasmic portion of the chain corresponds to 94-108 (SFFHIIRRSSAAKSR). A helical transmembrane segment spans residues 109–129 (ILLVFLDTVMFGLLTTGAAAA). The Extracellular segment spans residues 130-163 (GTIVYVSHYGNVNANWFPFCGQYNHFCERISGSL). A helical transmembrane segment spans residues 164 to 184 (IGSFIAVVIFMIIILMSAVSI). Over 185-187 (SKH) the chain is Cytoplasmic.

The protein belongs to the Casparian strip membrane proteins (CASP) family. Homodimer and heterodimers.

Its subcellular location is the cell membrane. The protein is CASP-like protein 2 of Lotus japonicus (Lotus corniculatus var. japonicus).